Consider the following 258-residue polypeptide: Coiled-coil domain-containing protein 127 (258 aa).

Residues 50–170 adopt a coiled-coil conformation; that stretch reads KEIEKEKEAC…EEALAERQSI (121 aa).

This Sus scrofa (Pig) protein is Coiled-coil domain-containing protein 127 (CCDC127).